Here is a 902-residue protein sequence, read N- to C-terminus: Desmocollin-2 (902 aa).

Residues 1–27 (MAAVGSMRSGSPAFGLGHLLTLAILAL) form the signal peptide. A propeptide spanning residues 28-135 (ASDACKEVVL…TEKVLSRAKR (108 aa)) is cleaved from the precursor. Cadherin domains lie at 136 to 243 (RWAP…YPIF), 244 to 355 (TQKL…LPTF), 356 to 471 (TRTT…GPEC), 472 to 579 (IPPM…FIPK), and 580 to 694 (QTVV…RLGP). Residues 136-694 (RWAPIPCSML…TGYADVRLGP (559 aa)) are Extracellular-facing. A glycan (N-linked (GlcNAc...) asparagine) is linked at N166. Residues N392, N546, and N629 are each glycosylated (N-linked (GlcNAc...) asparagine). Residues 695 to 715 (WAILAILLGIALLFCILFTLV) traverse the membrane as a helical segment. Residues 716-902 (CSVSRASKQQ…RTLAEVCAKR (187 aa)) lie on the Cytoplasmic side of the membrane. Phosphoserine occurs at positions 865, 869, and 874.

As to quaternary structure, interacts with DSP, PKP2 and JUP. Interacts with DSG3; the interaction may limit the interaction of DSC3 with p38MAPK family members and therefore repress p38MAPK signaling activation. In terms of tissue distribution, expressed in intestinal epithelial cells (at protein level). Expressed in the heart. Expressed in tongue, bladder, stomach, liver, kidney, and lung.

It is found in the cell membrane. The protein resides in the cell junction. The protein localises to the desmosome. In terms of biological role, a component of desmosome cell-cell junctions which are required for positive regulation of cellular adhesion. Promotes timely incorporation of DSG2 into desmosome intercellular junctions and promotes interaction of desmosome cell junctions with intermediate filament cytokeratin, via modulation of DSP phosphorylation. Plays an important role in desmosome-mediated maintenance of intestinal epithelial cell intercellular adhesion strength and barrier function. Positively regulates wound healing of intestinal mucosa via promotion of epithelial cell migration, and also plays a role in mechanotransduction of force between intestinal epithelial cells and extracellular matrix. May contribute to epidermal cell positioning (stratification) by mediating differential adhesiveness between cells that express different isoforms. May promote p38MAPK signaling activation that facilitates keratinocyte migration. The sequence is that of Desmocollin-2 (Dsc2) from Mus musculus (Mouse).